A 1170-amino-acid polypeptide reads, in one-letter code: Putative DNA topoisomerase 2, mitochondrial (1170 aa).

Residues Asn106, Asn135, 163 to 165 (SSN), 176 to 183 (GRNGYGAK), and 396 to 398 (QTK) each bind ATP. One can recognise a Toprim domain in the interval 475-590 (CTLILTEGDS…SLVHTDGFIQ (116 aa)). 3 residues coordinate Mg(2+): Glu481, Asp559, and Asp561. One can recognise a Topo IIA-type catalytic domain in the interval 722–1157 (IPSLIDGLKP…DWKSVWRSEL (436 aa)). Catalysis depends on Tyr813, which acts as the O-(5'-phospho-DNA)-tyrosine intermediate.

Belongs to the type II topoisomerase family. As to quaternary structure, homodimer. It depends on Mg(2+) as a cofactor. Mn(2+) serves as cofactor. The cofactor is Ca(2+).

The protein localises to the mitochondrion. The catalysed reaction is ATP-dependent breakage, passage and rejoining of double-stranded DNA.. Control of topological states of DNA by transient breakage and subsequent rejoining of DNA strands. Topoisomerase II makes double-strand breaks. In Caenorhabditis elegans, this protein is Putative DNA topoisomerase 2, mitochondrial.